Consider the following 512-residue polypeptide: NAD(P)H-quinone oxidoreductase subunit 2 B, chloroplastic (512 aa).

The next 14 helical transmembrane spans lie at 31-51 (FIFP…IDLT), 57-77 (IPWL…ALLF), 99-119 (IFQF…VEYI), 124-144 (MAIT…MFLC), 149-169 (LITI…LSGY), 183-203 (YLLM…WLYG), 229-249 (ISIA…LAPF), 261-281 (PTPV…ALAT), 295-315 (WHLL…LIAI), 323-343 (MLAY…IVGD), 354-374 (YMLF…LFGL), 395-415 (ALSL…AGFF), 418-438 (LYLF…IGLL), and 484-504 (MIVC…IIAI).

It belongs to the complex I subunit 2 family. As to quaternary structure, NDH is composed of at least 16 different subunits, 5 of which are encoded in the nucleus.

It localises to the plastid. It is found in the chloroplast thylakoid membrane. The catalysed reaction is a plastoquinone + NADH + (n+1) H(+)(in) = a plastoquinol + NAD(+) + n H(+)(out). The enzyme catalyses a plastoquinone + NADPH + (n+1) H(+)(in) = a plastoquinol + NADP(+) + n H(+)(out). Its function is as follows. NDH shuttles electrons from NAD(P)H:plastoquinone, via FMN and iron-sulfur (Fe-S) centers, to quinones in the photosynthetic chain and possibly in a chloroplast respiratory chain. The immediate electron acceptor for the enzyme in this species is believed to be plastoquinone. Couples the redox reaction to proton translocation, and thus conserves the redox energy in a proton gradient. This is NAD(P)H-quinone oxidoreductase subunit 2 B, chloroplastic from Arabidopsis thaliana (Mouse-ear cress).